The sequence spans 306 residues: Glutathione transport system permease protein GsiC (306 aa).

Residues 1–8 are Cytoplasmic-facing; it reads MLNYVLKR. A helical membrane pass occupies residues 9-29; the sequence is LLGLIPTLLIVAVLVFLFVHL. Residues 30-102 are Periplasmic-facing; it reads LPGDPARLIA…SRFLPTLWLT (73 aa). The ABC transmembrane type-1 domain occupies 95–292; the sequence is FLPTLWLTIT…LEFILINLVV (198 aa). Residues 103–123 traverse the membrane as a helical segment; it reads ITSMIWAVLFGMAIGIAAAVW. Residues 124-134 lie on the Cytoplasmic side of the membrane; sequence RNRWPDRVGMT. The helical transmembrane segment at 135–155 threads the bilayer; the sequence is LAVTGISFPAFALGMLLMQIF. The Periplasmic portion of the chain corresponds to 156–168; it reads SVDLGWLPTVGAD. The helical transmembrane segment at 169-189 threads the bilayer; that stretch reads SWQHYILPSLTLGAAVASVMA. Residues 190-228 are Cytoplasmic-facing; that stretch reads RFTRSSFVDVLSEDYMRTARAKGVSETWVVLKHGLRNAM. The chain crosses the membrane as a helical span at residues 229–249; that stretch reads IPVVTMMGLQFGFLLGGSIVV. Residues 250–278 lie on the Periplasmic side of the membrane; the sequence is EKVFNWPGLGRLLVDSVDMRDYPVIQAEV. A helical membrane pass occupies residues 279–299; it reads LLFSLEFILINLVVDVLYAAI. Over 300–306 the chain is Cytoplasmic; sequence NPAIRYK.

It belongs to the binding-protein-dependent transport system permease family. As to quaternary structure, the complex is composed of two ATP-binding proteins (GsiA), two transmembrane proteins (GsiC and GsiD) and a solute-binding protein (GsiB).

It localises to the cell inner membrane. In terms of biological role, part of the ABC transporter complex GsiABCD involved in glutathione import. Probably responsible for the translocation of the substrate across the membrane. This Salmonella choleraesuis (strain SC-B67) protein is Glutathione transport system permease protein GsiC.